Reading from the N-terminus, the 60-residue chain is Metallothionein (60 aa).

The tract at residues 1–28 is beta; the sequence is MDPCDCSKTGKCNCGGSCTCTNCSCTSC. The a divalent metal cation site is built by Cys-4, Cys-6, Cys-12, Cys-14, Cys-18, Cys-20, Cys-23, Cys-25, Cys-28, Cys-32, Cys-33, Cys-35, Cys-36, Cys-40, Cys-43, Cys-47, Cys-49, Cys-54, Cys-58, and Cys-59. The interval 29–60 is alpha; that stretch reads KKSCCACCPSGCTKCASGCVCKGKTCDTTCCQ.

It belongs to the metallothionein superfamily. Type 1 family.

Functionally, metallothioneins have a high content of cysteine residues that bind various heavy metals. This Oryzias latipes (Japanese rice fish) protein is Metallothionein (mt).